The primary structure comprises 379 residues: MEGNRDEAEKCVEIAREALNAGNREKAQRFLQKAEKLYPLPSARALLEIIMKNGSTAGNSPHCRKPSGSGDQSKPNCTKDSTSGSGEGGKGYTKDQVDGVLSINKCKNYYEVLGVTKDAGDEDLKKAYRKLALKFHPDKNHAPGATDAFKKIGNAYAVLSNPEKRKQYDLTGNEEQACNHQNNGRFNFHRGCEADITPEDLFNIFFGGGFPSGSVHSFSNGRAGYSQQHQHRHSGHEREEERGDGGFSVFIQLMPIIVLILVSLLSQLMVSNPPYSLYPRSGTGQTIKMQTENLGVVYYVNKDFKNEYKGMLLQKVEKSVEEDYVTNIRNNCWKERQQKTDMQYAAKVYRDDRLRRKADALSMDNCKELERLTSLYKGG.

Residues 1-244 (MEGNRDEAEK…GHEREEERGD (244 aa)) lie on the Cytoplasmic side of the membrane. The segment at 55-94 (STAGNSPHCRKPSGSGDQSKPNCTKDSTSGSGEGGKGYTK) is disordered. Residues 69–84 (SGDQSKPNCTKDSTSG) are compositionally biased toward polar residues. Positions 108–172 (NYYEVLGVTK…EKRKQYDLTG (65 aa)) constitute a J domain. Residues 219–241 (SNGRAGYSQQHQHRHSGHEREEE) are disordered. Residues 245-265 (GGFSVFIQLMPIIVLILVSLL) traverse the membrane as a helical segment. Residues 266–379 (SQLMVSNPPY…ERLTSLYKGG (114 aa)) are Lumenal-facing.

Belongs to the DnaJ family. DNAJB12/DNAJB14 subfamily. As to quaternary structure, interacts (via J domain) with HSPA8/Hsc70. Forms a multiprotein complex, at least composed of DNAJB12, DNAJB14, HSPA8/Hsc70 and SGTA; interaction with DNAJB14 and HSPA8/Hsc70 is direct.

It is found in the endoplasmic reticulum membrane. It localises to the nucleus membrane. Its function is as follows. Acts as a co-chaperone with HSPA8/Hsc70; required to promote protein folding and trafficking, prevent aggregation of client proteins, and promote unfolded proteins to endoplasmic reticulum-associated degradation (ERAD) pathway. Acts by determining HSPA8/Hsc70's ATPase and polypeptide-binding activities. Can also act independently of HSPA8/Hsc70: together with DNAJB12, acts as a chaperone that promotes maturation of potassium channels KCND2 and KCNH2 by stabilizing nascent channel subunits and assembling them into tetramers. While stabilization of nascent channel proteins is dependent on HSPA8/Hsc70, the process of oligomerization of channel subunits is independent of HSPA8/Hsc70. When overexpressed, forms membranous structures together with DNAJB12 and HSPA8/Hsc70 within the nucleus; the role of these structures, named DJANGOs, is still unclear. (Microbial infection) In case of infection by polyomavirus, involved in the virus endoplasmic reticulum membrane penetration and infection. The protein is DnaJ homolog subfamily B member 14 of Homo sapiens (Human).